The sequence spans 101 residues: Large ribosomal subunit protein uL6m (101 aa).

The protein belongs to the universal ribosomal protein uL6 family.

It localises to the mitochondrion. The sequence is that of Large ribosomal subunit protein uL6m (RPL6) from Marchantia polymorpha (Common liverwort).